Consider the following 769-residue polypeptide: MSTSVEPNETEALLRKQNDLSTTASIEEKYPHQQGEAAEDDDDTLKRTQYDEAKETAESLKQVESILAPIVFTALSFFVRFYRISVNDHVVWDEAHFGKFGSYYLRHEFYHDVHPPLGKMLVGLSGYLAGYNGSWDFPSGEKYPDYIDYTKMRLFNATFSALCVPLAYFTGKEVGFSMFTTWLFTLMVALESSYVTLGKFILLDSMLLFFTVATVFCFSRFNNFNNKSQEFSRKWWKWILLTGVSIGCTCSVKMVGLFVTTLVGIYTVVDLWNKLSDKSISWTKYIQHWFARIVALILVPIFIFMLSFKVHFDLLYKSGTGDANMSSLFQANLAGSDVGGGPREVSMFHSVITLKNQGLSGGLLHSHVQTFPEGSKQQQVTTYGHKDSNNNWIFQRARGQPYYDTSGNTTDIEYIFDGMHVRLMHPQTGRNLHTHDIPAPVSKSEYEVACYGNLTIGDPKDNWTVEIMEQASDEDKMRLHPLTSSFRLKNEVMNCYLGVTGTTLPQWGFRQGEVVCYKNPFKKDKRTWWNIENNRNAVLPPAPEDFKLPKTKFIRDFIQLNLAMMATNNALVPDTEKQDDLASSFWQWPTLNVGIRMCGWGPENPKYYMIGSPATTWTSTVGVILFAFIVLYYLIRWQRQYVDFPSTNPHKLKLFLMGGIYPMFGWGLHFLPFAIMGRVTYVHHYVPALYFAMLVFCYEVESFSSRLNKPNASPVSKLLYLAIYIGLLSLVAGTFWYFRYLSWGMEGPKEDWKHLKLLESWRVSDDQYT.

The disordered stretch occupies residues 1 to 44 (MSTSVEPNETEALLRKQNDLSTTASIEEKYPHQQGEAAEDDDDT). N-linked (GlcNAc...) asparagine glycosylation is present at Asn-8. The chain crosses the membrane as a helical span at residues 59–79 (SLKQVESILAPIVFTALSFFV). Asn-132 carries N-linked (GlcNAc...) asparagine glycosylation. The next 3 helical transmembrane spans lie at 152-169 (MRLFNATFSALCVPLAYF), 176-194 (FSMFTTWLFTLMVALESSY), and 200-218 (FILLDSMLLFFTVATVFCF). Asn-226 carries an N-linked (GlcNAc...) asparagine glycan. 2 consecutive transmembrane segments (helical) span residues 252-272 (VKMVGLFVTTLVGIYTVVDLW) and 288-308 (HWFARIVALILVPIFIFMLSF). N-linked (GlcNAc...) asparagine glycosylation is present at Asn-324. In terms of domain architecture, MIR 1 spans 342-397 (PREVSMFHSVITLKNQGLSGGLLHSHVQTFPEGSKQQQVTTYGHKDSNNNWIFQRA). Residues Asn-408, Asn-453, and Asn-462 are each glycosylated (N-linked (GlcNAc...) asparagine). MIR domains lie at 412–468 (IEYI…VEIM) and 474–534 (EDKM…IENN). 4 consecutive transmembrane segments (helical) span residues 615 to 635 (TTWTSTVGVILFAFIVLYYLI), 655 to 675 (FLMGGIYPMFGWGLHFLPFAI), 679 to 699 (VTYVHHYVPALYFAMLVFCYE), and 718 to 738 (LLYLAIYIGLLSLVAGTFWYF).

The protein belongs to the glycosyltransferase 39 family. In terms of assembly, PMT1 and PMT2 form a functional heterodimer.

The protein localises to the endoplasmic reticulum membrane. The catalysed reaction is a di-trans,poly-cis-dolichyl beta-D-mannosyl phosphate + L-seryl-[protein] = 3-O-(alpha-D-mannosyl)-L-seryl-[protein] + a di-trans,poly-cis-dolichyl phosphate + H(+). It carries out the reaction a di-trans,poly-cis-dolichyl beta-D-mannosyl phosphate + L-threonyl-[protein] = 3-O-(alpha-D-mannosyl)-L-threonyl-[protein] + a di-trans,poly-cis-dolichyl phosphate + H(+). The protein operates within protein modification; protein glycosylation. In terms of biological role, protein mannosyltransferase (PMT) involved in hyphal growth and drug sensitivity. Transfers mannose from Dol-P-mannose to Ser or Thr residues on proteins. PMT1, PMT2 and PMT4 account for most of the protein-O-glycosylation activity, while PMT5 and PMT6 may specifically modulate a much narrower spectrum of target proteins. Essential protein that plays an important role in virulence. This is Dolichyl-phosphate-mannose--protein mannosyltransferase 2 from Candida albicans (strain SC5314 / ATCC MYA-2876) (Yeast).